Here is a 190-residue protein sequence, read N- to C-terminus: Threonylcarbamoyl-AMP synthase (190 aa).

The 184-residue stretch at 7–190 folds into the YrdC-like domain; that stretch reads TGSIAAVVDL…ALTGELFRQG (184 aa).

The protein belongs to the SUA5 family. TsaC subfamily.

The protein resides in the cytoplasm. The catalysed reaction is L-threonine + hydrogencarbonate + ATP = L-threonylcarbamoyladenylate + diphosphate + H2O. Required for the formation of a threonylcarbamoyl group on adenosine at position 37 (t(6)A37) in tRNAs that read codons beginning with adenine. Catalyzes the conversion of L-threonine, HCO(3)(-)/CO(2) and ATP to give threonylcarbamoyl-AMP (TC-AMP) as the acyladenylate intermediate, with the release of diphosphate. This Salmonella paratyphi A (strain ATCC 9150 / SARB42) protein is Threonylcarbamoyl-AMP synthase.